Here is a 244-residue protein sequence, read N- to C-terminus: Transcription initiation factor TFIID subunit 14 (244 aa).

Residues 1–134 (MVATVKRTIR…PLLTEELAKS (134 aa)) form the YEATS domain. 2 acylated histone binding regions span residues 59–61 (HPT) and 81–83 (WGG). Residues 133-169 (KSGSTEETTANTGTIGKRRTTTNTTAEPKAKRAKTGS) form a disordered region. Over residues 143–157 (NTGTIGKRRTTTNTT) the composition is skewed to low complexity. Lysine 181 is covalently cross-linked (Glycyl lysine isopeptide (Lys-Gly) (interchain with G-Cter in ubiquitin)).

The protein belongs to the TAF14 family. The 1.2 MDa TFIID complex is composed of TATA binding protein (TBP) and the 14 TBP-associated factors. One copy of each TAF1, TAF2, TAF3, TAF7, TAF8, TAF11, TAF13, two copies of each TAF4, TAF5, TAF6, TAF9, TAF10, TAF12, and three copies of TAF14. TFIIF is composed of three different subunits: TFG1/RAP74, TFG2/RAP30 and TAF14. Component of the SWI/SNF global transcription activator complex. The 1.14 MDa SWI/SNF complex is composed of 11 different subunits: one copy each of SWI1, SNF2/SWI2, SNF5, SNF12/SWP73, ARP7/SWP61, ARP9/SWP59; two copies each of SWI3, SNF6, SNF11, SWP82; and three copies of TAF14/SWP29. Component of the chromatin-remodeling INO80 complex, at least composed of ARP4, ARP5, ARP8, RVB1, RVB2, TAF14, NHP10, IES1, IES3, IES4, IES6, ACT1, IES2, IES5 and INO80. Component of the NuA3 histone acetyltransferase (HAT) complex. The NuA3 HAT complex has 2 functionally distinct forms that participate in transcription. The NuA3b HAT complex contains an additional subunit, PDP3.

It is found in the nucleus. Functions as a component of the DNA-binding general transcription factor complex TFIID, the RNA polymerase II associated general transcription factor complex TFIIF, and the chromatin-remodeling complex SWI/SNF. Binding of TFIID to a promoter (with or without TATA element) is the initial step in preinitiation complex (PIC) formation. TFIID plays a key role in the regulation of gene expression by RNA polymerase II through different activities such as transcription activator interaction, core promoter recognition and selectivity, TFIIA and TFIIB interaction, chromatin modification (histone acetylation by TAF1), facilitation of DNA opening and initiation of transcription. TFIIF is essential for the initiation of transcription by RNA polymerase II. TFIIF functions include the recruitment of RNA polymerase II to the promoter bound DNA-TBP-TFIIB complex, decreasing the affinity of RNA polymerase II for non-specific DNA, allowing for the subsequent recruitment of TFIIE and TFIIH, and facilitating RNA polymerase II elongation. TAF14 acts as a chromatin reader that specifically recognizes and binds histones that are acylated. Recognizes and binds histone H3 acetylated or crotonylated at 'Lys-9' (H3K9ac and H3K9cr, respectively), with some preference for crotonylated lysine. Component of the SWI/SNF complex, an ATP-dependent chromatin-remodeling complex, is required for the positive and negative regulation of gene expression of a large number of genes. It changes chromatin structure by altering DNA-histone contacts within a nucleosome, leading eventually to a change in nucleosome position, thus facilitating or repressing binding of gene-specific transcription factors. Component of the NuA3 histone acetyltransferase complex. The NuA3 HAT complex has 2 functionally distinct forms. NuA3a binds H3K4me3, through the PHD finger of YNG1, and acetylates H3K14 at the promoter region of actively transcribed genes to promote transcription initiation. NuA3b binds H3K36me3 at the coding regions of actively transcribed genes, through the PWWP domain of PDP3, and coordinates transcription elongation. Does not bind DNA. This is Transcription initiation factor TFIID subunit 14 (TAF14) from Saccharomyces cerevisiae (strain ATCC 204508 / S288c) (Baker's yeast).